The primary structure comprises 210 residues: Urease accessory protein UreF (210 aa).

The protein belongs to the UreF family. In terms of assembly, ureD, UreF and UreG form a complex that acts as a GTP-hydrolysis-dependent molecular chaperone, activating the urease apoprotein by helping to assemble the nickel containing metallocenter of UreC. The UreE protein probably delivers the nickel.

Its subcellular location is the cytoplasm. Functionally, required for maturation of urease via the functional incorporation of the urease nickel metallocenter. The chain is Urease accessory protein UreF from Cereibacter sphaeroides (strain ATCC 17029 / ATH 2.4.9) (Rhodobacter sphaeroides).